Here is a 146-residue protein sequence, read N- to C-terminus: UPF0260 protein Swoo_2117 (146 aa).

This sequence belongs to the UPF0260 family.

The protein is UPF0260 protein Swoo_2117 of Shewanella woodyi (strain ATCC 51908 / MS32).